A 353-amino-acid chain; its full sequence is Diacetylchitobiose uptake system permease protein NgcF (353 aa).

The tract at residues 1 to 24 (MKDTIPTAETASRRPEPAARGGRP) is disordered. Transmembrane regions (helical) follow at residues 36–56 (FFLAFLGVPLAIFVIFVLIPF), 100–120 (LLAAFVPLVTLTLALGVAVAI), 141–161 (IISFFPYVVPAIIVGLIWAQM), 197–217 (VMFVIVWGLVGFYAVLFIAAI), 254–274 (AYIYLGIAALDAFVYVQAMVP), and 303–323 (TAMGVVLAAVTLVFAALVFLV). Residues 95–320 (LRNVALLAAF…AVTLVFAALV (226 aa)) form the ABC transmembrane type-1 domain. The interval 329 to 353 (GGEGESKRKAPGSRARRAAAKGGAR) is disordered. Residues 337-353 (KAPGSRARRAAAKGGAR) show a composition bias toward basic residues.

The protein belongs to the binding-protein-dependent transport system permease family. In terms of assembly, the complex is composed of two ATP-binding proteins (MsiK), two transmembrane proteins (NgcF and NgcG) and a solute-binding protein (NgcE).

It localises to the cell membrane. Part of the ABC transporter complex NgcEFG-MsiK involved in N,N'-diacetylchitobiose ((GlcNAc)2) uptake. Responsible for the translocation of the substrate across the membrane. The polypeptide is Diacetylchitobiose uptake system permease protein NgcF (Streptomyces coelicolor (strain ATCC BAA-471 / A3(2) / M145)).